A 220-amino-acid chain; its full sequence is Uracil-DNA glycosylase (220 aa).

D65 (proton acceptor) is an active-site residue.

Belongs to the uracil-DNA glycosylase (UDG) superfamily. UNG family.

It is found in the cytoplasm. The enzyme catalyses Hydrolyzes single-stranded DNA or mismatched double-stranded DNA and polynucleotides, releasing free uracil.. Excises uracil residues from the DNA which can arise as a result of misincorporation of dUMP residues by DNA polymerase or due to deamination of cytosine. The protein is Uracil-DNA glycosylase of Leuconostoc mesenteroides subsp. mesenteroides (strain ATCC 8293 / DSM 20343 / BCRC 11652 / CCM 1803 / JCM 6124 / NCDO 523 / NBRC 100496 / NCIMB 8023 / NCTC 12954 / NRRL B-1118 / 37Y).